The following is a 132-amino-acid chain: Small ribosomal subunit protein uS8c (132 aa).

This sequence belongs to the universal ribosomal protein uS8 family. Part of the 30S ribosomal subunit.

It is found in the plastid. The protein localises to the chloroplast. Functionally, one of the primary rRNA binding proteins, it binds directly to 16S rRNA central domain where it helps coordinate assembly of the platform of the 30S subunit. The polypeptide is Small ribosomal subunit protein uS8c (rps8) (Gracilaria tenuistipitata var. liui (Red alga)).